The following is a 514-amino-acid chain: Glutamate--cysteine ligase (514 aa).

Belongs to the glutamate--cysteine ligase type 1 family. Type 1 subfamily.

It catalyses the reaction L-cysteine + L-glutamate + ATP = gamma-L-glutamyl-L-cysteine + ADP + phosphate + H(+). It participates in sulfur metabolism; glutathione biosynthesis; glutathione from L-cysteine and L-glutamate: step 1/2. The sequence is that of Glutamate--cysteine ligase from Enterobacter sp. (strain 638).